A 208-amino-acid chain; its full sequence is Imidazole glycerol phosphate synthase subunit HisH (208 aa).

The region spanning 1–206 is the Glutamine amidotransferase type-1 domain; the sequence is MIVIVDYDTG…KEMTEDEALS (206 aa). Residue Cys-79 is the Nucleophile of the active site. Residues His-181 and Glu-183 contribute to the active site.

Heterodimer of HisH and HisF.

The protein resides in the cytoplasm. It catalyses the reaction 5-[(5-phospho-1-deoxy-D-ribulos-1-ylimino)methylamino]-1-(5-phospho-beta-D-ribosyl)imidazole-4-carboxamide + L-glutamine = D-erythro-1-(imidazol-4-yl)glycerol 3-phosphate + 5-amino-1-(5-phospho-beta-D-ribosyl)imidazole-4-carboxamide + L-glutamate + H(+). The catalysed reaction is L-glutamine + H2O = L-glutamate + NH4(+). Its pathway is amino-acid biosynthesis; L-histidine biosynthesis; L-histidine from 5-phospho-alpha-D-ribose 1-diphosphate: step 5/9. In terms of biological role, IGPS catalyzes the conversion of PRFAR and glutamine to IGP, AICAR and glutamate. The HisH subunit catalyzes the hydrolysis of glutamine to glutamate and ammonia as part of the synthesis of IGP and AICAR. The resulting ammonia molecule is channeled to the active site of HisF. The polypeptide is Imidazole glycerol phosphate synthase subunit HisH (Lacticaseibacillus casei (strain BL23) (Lactobacillus casei)).